Here is a 100-residue protein sequence, read N- to C-terminus: Enhancer of yellow 2 transcription factor (100 aa).

This sequence belongs to the ENY2 family. As to quaternary structure, component of the nuclear pore complex (NPC)-associated AMEX complex (anchoring and mRNA export complex), composed of at least e(y)2 and xmas-2. Component of the SAGA transcription coactivator-HAT complexes, at least composed of Ada2b, e(y)2, Pcaf/Gcn5, Taf10 and Nipped-A/Trrap. Within the SAGA complex, e(y)2, Sgf11, and not/nonstop form an additional subcomplex of SAGA called the DUB module (deubiquitination module). Component of the THO complex, composed of at least e(y)2, HPR1, THO2, THOC5, THOC6 and THOC7. Interacts with e(y)1. Interacts with su(Hw) (via zinc fingers). Interacts with xmas-2; required for localization to the nuclear periphery. Interacts with the nuclear pore complex (NPC).

Its subcellular location is the nucleus. The protein resides in the nucleoplasm. It localises to the cytoplasm. Involved in mRNA export coupled transcription activation by association with both the AMEX and the SAGA complexes. The SAGA complex is a multiprotein complex that activates transcription by remodeling chromatin and mediating histone acetylation and deubiquitination. Within the SAGA complex, participates in a subcomplex that specifically deubiquitinates histone H2B. The SAGA complex is recruited to specific gene promoters by activators, where it is required for transcription. Required for nuclear receptor-mediated transactivation. Involved in transcription elongation by recruiting the THO complex onto nascent mRNA. The AMEX complex functions in docking export-competent ribonucleoprotein particles (mRNPs) to the nuclear entrance of the nuclear pore complex (nuclear basket). AMEX participates in mRNA export and accurate chromatin positioning in the nucleus by tethering genes to the nuclear periphery. The sequence is that of Enhancer of yellow 2 transcription factor from Drosophila ananassae (Fruit fly).